The primary structure comprises 363 residues: Lactose transport ATP-binding protein LacK (363 aa).

The 231-residue stretch at 4 to 234 (VRLTDIRKSY…PDNMFVAGFI (231 aa)) folds into the ABC transporter domain. Position 36 to 43 (36 to 43 (GPSGCGKS)) interacts with ATP.

Belongs to the ABC transporter superfamily.

The protein resides in the cell inner membrane. In terms of biological role, part of the binding-protein-dependent transport system for lactose. Probably responsible for energy coupling to the transport system. The sequence is that of Lactose transport ATP-binding protein LacK (lacK) from Rhizobium radiobacter (Agrobacterium tumefaciens).